A 540-amino-acid polypeptide reads, in one-letter code: Cobalt-factor III methyltransferase (540 aa).

[4Fe-4S] cluster-binding residues include Cys-402, Cys-405, Cys-439, and Cys-443.

This sequence in the N-terminal section; belongs to the precorrin methyltransferase family. Requires [4Fe-4S] cluster as cofactor.

It carries out the reaction Co(II)-factor III + AH2 + S-adenosyl-L-methionine = Co-precorrin-4 + A + S-adenosyl-L-homocysteine. Its pathway is cofactor biosynthesis; adenosylcobalamin biosynthesis. Its function is as follows. Methyltransferase that catalyzes the reduction, ring contraction and methylation of C-17 in cobalt-factor III to form cobalt-precorrin-4. Is also able to convert cobalt-precorrin-3 to cobalt-precorrin-4. The polypeptide is Cobalt-factor III methyltransferase (cbiH60) (Priestia megaterium (Bacillus megaterium)).